An 83-amino-acid polypeptide reads, in one-letter code: MIKLRLKRYGKKRNATYRIVAMNNTDRRDGRALEELGFYDPIHNEVRLKEEAIKRRLAQGAQPTDTVRRLFVKANLLPETAQK.

Belongs to the bacterial ribosomal protein bS16 family.

The protein is Small ribosomal subunit protein bS16 of Thermosynechococcus vestitus (strain NIES-2133 / IAM M-273 / BP-1).